Reading from the N-terminus, the 698-residue chain is Long-chain-fatty-acid--CoA ligase 1 (698 aa).

An N-acetylmethionine modification is found at Met1. Tyr9 carries the 3'-nitrotyrosine modification. Residues 25-45 (LPTNTLMGFGAFAALTTFWYA) form a helical; Signal-anchor for type III membrane protein membrane-spanning segment. Residues 46-698 (TRPKPLKPPC…IDDLYSTIKV (653 aa)) lie on the Cytoplasmic side of the membrane. A Phosphotyrosine modification is found at Tyr84. O-linked (GlcNAc) serine glycosylation is present at Ser135. N6-acetyllysine occurs at positions 207, 356, and 386. At Ser620 the chain carries Phosphoserine. Position 632 is an N6-acetyllysine (Lys632).

Belongs to the ATP-dependent AMP-binding enzyme family. Mg(2+) serves as cofactor. As to expression, highly expressed in liver, heart, skeletal muscle, kidney and erythroid cells, and to a lesser extent in brain, lung, placenta and pancreas.

It is found in the mitochondrion outer membrane. The protein localises to the peroxisome membrane. The protein resides in the microsome membrane. It localises to the endoplasmic reticulum membrane. It carries out the reaction a long-chain fatty acid + ATP + CoA = a long-chain fatty acyl-CoA + AMP + diphosphate. It catalyses the reaction (5Z,8Z,11Z,14Z)-eicosatetraenoate + ATP + CoA = (5Z,8Z,11Z,14Z)-eicosatetraenoyl-CoA + AMP + diphosphate. The catalysed reaction is 3,7,11,15-tetramethylhexadecanoate + ATP + CoA = phytanoyl-CoA + AMP + diphosphate. The enzyme catalyses hexadecanoate + ATP + CoA = hexadecanoyl-CoA + AMP + diphosphate. It carries out the reaction (E)-hexadec-2-enoate + ATP + CoA = (2E)-hexadecenoyl-CoA + AMP + diphosphate. It catalyses the reaction 2,6,10,14-tetramethylpentadecanoate + ATP + CoA = pristanoyl-CoA + AMP + diphosphate. The catalysed reaction is 14,15-epoxy-(5Z,8Z,11Z)-eicosatrienoate + ATP + CoA = 14,15-epoxy-(5Z,8Z,11Z)-eicosatrienoyl-CoA + AMP + diphosphate. The enzyme catalyses 5-hydroxy-(6E,8Z,11Z,14Z)-eicosatetraenoate + ATP + CoA = 5-hydroxy-(6E,8Z,11Z,14Z)-eicosatetraenoyl-CoA + AMP + diphosphate. It carries out the reaction 12-hydroxy-(5Z,8Z,10E,14Z)-eicosatetraenoate + ATP + CoA = 12-hydroxy-(5Z,8Z,10E,14Z)-eicosatetraenoyl-CoA + AMP + diphosphate. It catalyses the reaction 15-hydroxy-(5Z,8Z,11Z,13E)-eicosatetraenoate + ATP + CoA = 15-hydroxy-(5Z,8Z,11Z,13E)-eicosatetraenoyl-CoA + AMP + diphosphate. The catalysed reaction is (9Z)-octadecenoate + ATP + CoA = (9Z)-octadecenoyl-CoA + AMP + diphosphate. With respect to regulation, inhibited at high temperature and by arachidonate. In terms of biological role, catalyzes the conversion of long-chain fatty acids to their active form acyl-CoAs for both synthesis of cellular lipids, and degradation via beta-oxidation. Preferentially uses palmitoleate, oleate and linoleate. Preferentially activates arachidonate than epoxyeicosatrienoic acids (EETs) or hydroxyeicosatrienoic acids (HETEs). This Homo sapiens (Human) protein is Long-chain-fatty-acid--CoA ligase 1.